The chain runs to 117 residues: uncharacterized protein (117 aa).

It localises to the plastid. It is found in the chloroplast. This is an uncharacterized protein from Chlamydomonas reinhardtii (Chlamydomonas smithii).